The primary structure comprises 192 residues: Signal peptidase complex catalytic subunit sec11 (192 aa).

Residues methionine 1–glutamine 18 lie on the Cytoplasmic side of the membrane. The helical; Signal-anchor for type II membrane protein transmembrane segment at valine 19 to phenylalanine 39 threads the bilayer. The Lumenal portion of the chain corresponds to threonine 40 to glutamine 192. Active-site charge relay system residues include serine 53, histidine 92, and aspartate 133. The interval valine 177–leucine 188 is C-terminal short (CTS) helix.

Belongs to the peptidase S26B family. Component of the signal peptidase complex (SPC) composed of a catalytic subunit SEC11 and three accessory subunits SPC1, SPC2 and SPC3. The complex induces a local thinning of the ER membrane which is used to measure the length of the signal peptide (SP) h-region of protein substrates. This ensures the selectivity of the complex towards h-regions shorter than 18-20 amino acids. SPC associates with the translocon complex.

Its subcellular location is the endoplasmic reticulum membrane. It carries out the reaction Cleavage of hydrophobic, N-terminal signal or leader sequences from secreted and periplasmic proteins.. Its function is as follows. Catalytic component of the signal peptidase complex (SPC) which catalyzes the cleavage of N-terminal signal sequences from nascent proteins as they are translocated into the lumen of the endoplasmic reticulum. Specifically cleaves N-terminal signal peptides that contain a hydrophobic alpha-helix (h-region) shorter than 18-20 amino acids. The protein is Signal peptidase complex catalytic subunit sec11 (sec11) of Aspergillus clavatus (strain ATCC 1007 / CBS 513.65 / DSM 816 / NCTC 3887 / NRRL 1 / QM 1276 / 107).